A 1247-amino-acid polypeptide reads, in one-letter code: Clustered mitochondria protein homolog (1247 aa).

A disordered region spans residues 1–43; the sequence is MTLGSETKTDVEVPIINGKHEIPQEENDSGHSSINTPDSSEPD. Polar residues predominate over residues 30–39; the sequence is GHSSINTPDS. A Clu domain is found at 329-579; it reads SDSLRAIELT…RSMPPDVHYL (251 aa). Residues 1222 to 1247 are disordered; sequence GKQQNGTTEESKTTDVAAQLDNETLD.

This sequence belongs to the CLU family.

The protein localises to the cytoplasm. Functionally, mRNA-binding protein involved in proper cytoplasmic distribution of mitochondria. The polypeptide is Clustered mitochondria protein homolog (Caenorhabditis elegans).